The following is a 319-amino-acid chain: Beta-xylosidase (319 aa).

The Proton acceptor role is filled by aspartate 14. Residue glutamate 222 is the Proton donor of the active site.

This sequence belongs to the glycosyl hydrolase 43 family.

It carries out the reaction Hydrolysis of (1-&gt;4)-beta-D-xylans, to remove successive D-xylose residues from the non-reducing termini.. Its function is as follows. Exoxylanase capable of acting on certain xylans and xylooligosaccharides. The protein is Beta-xylosidase (xynB) of Xylanibacter ruminicola (Prevotella ruminicola).